The sequence spans 665 residues: Fructose-1,6-bisphosphatase class 3 (665 aa).

It belongs to the FBPase class 3 family. Mn(2+) is required as a cofactor.

The enzyme catalyses beta-D-fructose 1,6-bisphosphate + H2O = beta-D-fructose 6-phosphate + phosphate. It participates in carbohydrate biosynthesis; gluconeogenesis. The chain is Fructose-1,6-bisphosphatase class 3 from Clostridium acetobutylicum (strain ATCC 824 / DSM 792 / JCM 1419 / IAM 19013 / LMG 5710 / NBRC 13948 / NRRL B-527 / VKM B-1787 / 2291 / W).